A 634-amino-acid polypeptide reads, in one-letter code: DNA mismatch repair protein MutL (634 aa).

A disordered region spans residues 406–427 (HTHHNDTKGSVHTKSFSARSSS).

Belongs to the DNA mismatch repair MutL/HexB family.

Functionally, this protein is involved in the repair of mismatches in DNA. It is required for dam-dependent methyl-directed DNA mismatch repair. May act as a 'molecular matchmaker', a protein that promotes the formation of a stable complex between two or more DNA-binding proteins in an ATP-dependent manner without itself being part of a final effector complex. The protein is DNA mismatch repair protein MutL of Anaplasma phagocytophilum (strain HZ).